The primary structure comprises 211 residues: Methylthioribulose-1-phosphate dehydratase (211 aa).

2 residues coordinate Zn(2+): histidine 94 and histidine 96.

Belongs to the aldolase class II family. MtnB subfamily. It depends on Zn(2+) as a cofactor.

The catalysed reaction is 5-(methylsulfanyl)-D-ribulose 1-phosphate = 5-methylsulfanyl-2,3-dioxopentyl phosphate + H2O. It participates in amino-acid biosynthesis; L-methionine biosynthesis via salvage pathway; L-methionine from S-methyl-5-thio-alpha-D-ribose 1-phosphate: step 2/6. Catalyzes the dehydration of methylthioribulose-1-phosphate (MTRu-1-P) into 2,3-diketo-5-methylthiopentyl-1-phosphate (DK-MTP-1-P). This is Methylthioribulose-1-phosphate dehydratase from Pseudoalteromonas translucida (strain TAC 125).